Here is a 248-residue protein sequence, read N- to C-terminus: Ubiquinone/menaquinone biosynthesis C-methyltransferase UbiE (248 aa).

S-adenosyl-L-methionine-binding positions include Ser68, Asp92, and 120–121 (NA).

This sequence belongs to the class I-like SAM-binding methyltransferase superfamily. MenG/UbiE family.

It carries out the reaction a 2-demethylmenaquinol + S-adenosyl-L-methionine = a menaquinol + S-adenosyl-L-homocysteine + H(+). It catalyses the reaction a 2-methoxy-6-(all-trans-polyprenyl)benzene-1,4-diol + S-adenosyl-L-methionine = a 5-methoxy-2-methyl-3-(all-trans-polyprenyl)benzene-1,4-diol + S-adenosyl-L-homocysteine + H(+). Its pathway is quinol/quinone metabolism; menaquinone biosynthesis; menaquinol from 1,4-dihydroxy-2-naphthoate: step 2/2. It participates in cofactor biosynthesis; ubiquinone biosynthesis. Functionally, methyltransferase required for the conversion of demethylmenaquinol (DMKH2) to menaquinol (MKH2) and the conversion of 2-polyprenyl-6-methoxy-1,4-benzoquinol (DDMQH2) to 2-polyprenyl-3-methyl-6-methoxy-1,4-benzoquinol (DMQH2). This chain is Ubiquinone/menaquinone biosynthesis C-methyltransferase UbiE, found in Rickettsia prowazekii (strain Madrid E).